The chain runs to 389 residues: uncharacterized protein (389 aa).

4 helical membrane-spanning segments follow: residues 31–51 (LFIVHSAIGAGVAYWIAVEVI), 96–116 (IMQIGTGYWQIFVVVGLALLV), 123–143 (APLVSNQMAIGGILIATMFPP), and 152–172 (MIDAFIGGGVGILVIALLPSS).

It to M.tuberculosis Rv2571c.

It is found in the cell membrane. This is an uncharacterized protein from Corynebacterium glutamicum (strain ATCC 13032 / DSM 20300 / JCM 1318 / BCRC 11384 / CCUG 27702 / LMG 3730 / NBRC 12168 / NCIMB 10025 / NRRL B-2784 / 534).